Reading from the N-terminus, the 363-residue chain is Ataxin-3 (363 aa).

A Josephin domain is found at Met-1 to Met-180. The active-site Nucleophile is the Cys-14. His-119 (proton acceptor) is an active-site residue. Asn-134 is an active-site residue. Positions Ile-192–Val-209 are enriched in basic and acidic residues. The segment at Ile-192–Ala-212 is disordered. UIM domains follow at residues Glu-227–Glu-246, Asp-247–Ser-266, and Ser-337–His-356. Residues Met-260–Ser-290 show a composition bias toward polar residues. Positions Met-260–Lys-363 are disordered. Positions Ala-353–Lys-363 are enriched in basic and acidic residues.

Widely expressed.

The protein resides in the nucleus matrix. Its subcellular location is the nucleus. It localises to the lysosome membrane. The catalysed reaction is Thiol-dependent hydrolysis of ester, thioester, amide, peptide and isopeptide bonds formed by the C-terminal Gly of ubiquitin (a 76-residue protein attached to proteins as an intracellular targeting signal).. Its function is as follows. Deubiquitinating enzyme involved in protein homeostasis maintenance, transcription, cytoskeleton regulation, myogenesis and degradation of misfolded chaperone substrates. Binds long polyubiquitin chains and trims them, while it has weak or no activity against chains of 4 or less ubiquitins. Involved in degradation of misfolded chaperone substrates via its interaction with STUB1/CHIP: recruited to monoubiquitinated STUB1/CHIP, and restricts the length of ubiquitin chain attached to STUB1/CHIP substrates and preventing further chain extension. Interacts with key regulators of transcription and represses transcription: acts as a histone-binding protein that regulates transcription. Acts as a negative regulator of mTORC1 signaling in response to amino acid deprivation by mediating deubiquitination of RHEB, thereby promoting RHEB inactivation by the TSC-TBC complex. Regulates autophagy via the deubiquitination of 'Lys-402' of BECN1 leading to the stabilization of BECN1. The polypeptide is Ataxin-3 (ATXN3) (Gallus gallus (Chicken)).